Reading from the N-terminus, the 1403-residue chain is Baculoviral IAP repeat-containing protein 1a (1403 aa).

3 BIR repeats span residues 63–128 (RLKT…EFLQ), 162–228 (RLES…EFLQ), and 281–346 (RMDT…VFLQ). Zn(2+) is bound by residues cysteine 315, cysteine 318, histidine 335, and cysteine 342. Residues 464–758 (SVMCVEGETG…EFLAAMRLTE (295 aa)) form the NACHT domain. Lysine 476 is a binding site for ATP.

Interacts (via NACHT domain) with APAF1 (via CARD and NACHT domains).

Its function is as follows. Anti-apoptotic protein which acts by inhibiting the activities of CASP3, CASP7 and CASP9. Can inhibit the autocleavage of pro-CASP9 and cleavage of pro-CASP3 by CASP9. Capable of inhibiting CASP9 autoproteolysis at 'Asp-315' and decreasing the rate of auto proteolysis at 'Asp-330'. Acts as a mediator of neuronal survival in pathological conditions. Prevents motor-neuron apoptosis induced by a variety of signals. The sequence is that of Baculoviral IAP repeat-containing protein 1a (Naip1) from Mus musculus (Mouse).